The primary structure comprises 129 residues: Small ribosomal subunit protein uS11 (129 aa).

The protein belongs to the universal ribosomal protein uS11 family. In terms of assembly, part of the 30S ribosomal subunit. Interacts with proteins S7 and S18. Binds to IF-3.

Functionally, located on the platform of the 30S subunit, it bridges several disparate RNA helices of the 16S rRNA. Forms part of the Shine-Dalgarno cleft in the 70S ribosome. The sequence is that of Small ribosomal subunit protein uS11 from Methylobacterium sp. (strain 4-46).